We begin with the raw amino-acid sequence, 362 residues long: Peptide chain release factor 1 (362 aa).

The residue at position 235 (Q235) is an N5-methylglutamine.

Belongs to the prokaryotic/mitochondrial release factor family. Methylated by PrmC. Methylation increases the termination efficiency of RF1.

Its subcellular location is the cytoplasm. Peptide chain release factor 1 directs the termination of translation in response to the peptide chain termination codons UAG and UAA. The chain is Peptide chain release factor 1 from Acinetobacter baumannii (strain ACICU).